The following is a 525-amino-acid chain: Ribonuclease Y (525 aa).

The chain crosses the membrane as a helical span at residues 3–23 (IFFISLVLIVLASVVFFVGGF). The region spanning 215 to 300 (ALSVVHIQSD…KAYEDAKKEI (86 aa)) is the KH domain. One can recognise an HD domain in the interval 341–433 (LLQHSREVAM…VDAANVISLS (93 aa)).

This sequence belongs to the RNase Y family.

The protein localises to the cell membrane. Functionally, endoribonuclease that initiates mRNA decay. This chain is Ribonuclease Y, found in Chlorobium phaeobacteroides (strain DSM 266 / SMG 266 / 2430).